The sequence spans 96 residues: Small ribosomal subunit protein bS18 (96 aa).

Residues 1–22 (MYKDIDSHQRDSRTDGHQDGFK) show a composition bias toward basic and acidic residues. Residues 1–25 (MYKDIDSHQRDSRTDGHQDGFKKNP) form a disordered region.

Belongs to the bacterial ribosomal protein bS18 family. Part of the 30S ribosomal subunit. Forms a tight heterodimer with protein bS6.

Its function is as follows. Binds as a heterodimer with protein bS6 to the central domain of the 16S rRNA, where it helps stabilize the platform of the 30S subunit. In Borrelia duttonii (strain Ly), this protein is Small ribosomal subunit protein bS18.